Consider the following 183-residue polypeptide: Inner membrane-spanning protein YciB (183 aa).

Helical transmembrane passes span 19–39 (LYGV…QLIV), 53–73 (IMGI…DLNF), 76–96 (WKVT…QFVF), 121–141 (LGWA…SYYF), and 151–171 (TFGF…YLYP).

This sequence belongs to the YciB family.

The protein localises to the cell inner membrane. Functionally, plays a role in cell envelope biogenesis, maintenance of cell envelope integrity and membrane homeostasis. This is Inner membrane-spanning protein YciB from Actinobacillus pleuropneumoniae serotype 7 (strain AP76).